Consider the following 218-residue polypeptide: Orotate phosphoribosyltransferase (218 aa).

Lysine 26 contacts 5-phospho-alpha-D-ribose 1-diphosphate. Phenylalanine 34–phenylalanine 35 serves as a coordination point for orotate. Residues tyrosine 72–lysine 73, arginine 99, lysine 100, lysine 103, histidine 105, and aspartate 124–alanine 132 each bind 5-phospho-alpha-D-ribose 1-diphosphate. 2 residues coordinate orotate: threonine 128 and arginine 156.

The protein belongs to the purine/pyrimidine phosphoribosyltransferase family. PyrE subfamily. In terms of assembly, homodimer. Mg(2+) is required as a cofactor.

It catalyses the reaction orotidine 5'-phosphate + diphosphate = orotate + 5-phospho-alpha-D-ribose 1-diphosphate. The protein operates within pyrimidine metabolism; UMP biosynthesis via de novo pathway; UMP from orotate: step 1/2. Catalyzes the transfer of a ribosyl phosphate group from 5-phosphoribose 1-diphosphate to orotate, leading to the formation of orotidine monophosphate (OMP). The protein is Orotate phosphoribosyltransferase of Hamiltonella defensa subsp. Acyrthosiphon pisum (strain 5AT).